Reading from the N-terminus, the 256-residue chain is Phosphoribosylaminoimidazole-succinocarboxamide synthase (256 aa).

The disordered stretch occupies residues 234–256 (KPQKPAAAKKKAPVSKKTVKRTR). Residues 240 to 256 (AAKKKAPVSKKTVKRTR) are compositionally biased toward basic residues.

Belongs to the SAICAR synthetase family.

The catalysed reaction is 5-amino-1-(5-phospho-D-ribosyl)imidazole-4-carboxylate + L-aspartate + ATP = (2S)-2-[5-amino-1-(5-phospho-beta-D-ribosyl)imidazole-4-carboxamido]succinate + ADP + phosphate + 2 H(+). The protein operates within purine metabolism; IMP biosynthesis via de novo pathway; 5-amino-1-(5-phospho-D-ribosyl)imidazole-4-carboxamide from 5-amino-1-(5-phospho-D-ribosyl)imidazole-4-carboxylate: step 1/2. The protein is Phosphoribosylaminoimidazole-succinocarboxamide synthase of Methanoregula boonei (strain DSM 21154 / JCM 14090 / 6A8).